Reading from the N-terminus, the 409-residue chain is MDYKSKILSVLLNKYENSKTAHTGERSAQRPQFSFRQKHELSKAYNDEMDYTNRLEINTALKDLIRKKIIEVKWEKWEENRIAEKVYLQYDFIPQAYREAGIEPKIEKMNRILKVLEPLAVHSWEWVRQWYKEVQQSFQNNKTARINLNDVKGYELLVKALSRLEGLEDSIPKRTFSQLVFGDTKLFETTIQNRLLIIYKRYGDIEYESDKEYLESIGILENIQPVYIKGNVDIRVRGEKIALGSFPGGFGLMDETIKELEIQYVHDESIMLIENMTTYYEQIKKNNNILFIYTGGFPKKNVQQLLKKLNIYLENHPVPVYHYGDLDYGGIQIFEYIKRSFFSGLEPYMMDVATYRQFVKYGMEFGEGYEEKLLKMLENEQYSLWHELIKEMLKEKKRVEQEVIVRNVI.

Component of antiplasmid transformation system Wadjet type I, composed of JetA, JetB, JetC and JetD. Expression of Wadjet type I in B.subtilis (strain BEST7003) reduces the transformation efficiency of plasmid pHCMC05. This chain is Wadjet protein JetD, found in Bacillus cereus (strain Q1).